A 754-amino-acid polypeptide reads, in one-letter code: DNA repair protein RAD4 (754 aa).

Residues 23–51 (EKAPLSRRRRVRRKNQPLPDAKKKFKTGL) form a disordered region. A compositionally biased stretch (basic residues) spans 27-37 (LSRRRRVRRKN). Residues 250 to 269 (DFLRAVSKGHGDPDISVQGF) mediate DNA binding. The interval 701 to 754 (IANHEARPYSEPSEPEDSLDYVSVDKAEESATDDDVGEDYSDFMKELEMSEESD) is disordered. Positions 730–741 (SATDDDVGEDYS) are enriched in acidic residues.

Belongs to the XPC family.

It is found in the cytoplasm. The protein localises to the nucleus. Involved in nucleotide excision repair of DNA damaged with UV light, bulky adducts, or cross-linking agents. The protein is DNA repair protein RAD4 (RAD4) of Saccharomyces cerevisiae (strain ATCC 204508 / S288c) (Baker's yeast).